The sequence spans 557 residues: Protein Red (557 aa).

The interval 1 to 90 (MPERDSEPFS…YAKLRQQEIE (90 aa)) is disordered. Positions 16 to 25 (DGHDVDDPHS) are enriched in basic and acidic residues. Residues 42-53 (TPRAAPTSAPPS) show a composition bias toward low complexity. Residues K98 and K137 each carry the N6-acetyllysine modification. K151 is covalently cross-linked (Glycyl lysine isopeptide (Lys-Gly) (interchain with G-Cter in SUMO2)). A disordered region spans residues 181-205 (KEKEEEELMEKPQKETKKDEDPENK). S287 carries the post-translational modification Phosphoserine. The span at 294 to 303 (RNKKLKKKDK) shows a compositional bias: basic residues. Positions 294–402 (RNKKLKKKDK…PMDVDKGPGS (109 aa)) are disordered. A compositionally biased stretch (basic and acidic residues) spans 304–313 (GKLEEKKPPE). Residues K310 and K331 each participate in a glycyl lysine isopeptide (Lys-Gly) (interchain with G-Cter in SUMO2) cross-link. The span at 332 to 398 (TPRDKERERY…VDDEPMDVDK (67 aa)) shows a compositional bias: basic and acidic residues. Tandem repeats lie at residues 342–343 (RE), 344–345 (RE), 346–347 (RD), 348–349 (RE), 350–351 (RD), 352–353 (RD), 354–355 (RE), 356–357 (RD), 358–359 (RE), 360–361 (RD), 362–363 (RE), 364–365 (RE), 366–367 (RE), 368–369 (RD), 370–371 (RE), 372–373 (RE), and 374–375 (RE). The tract at residues 342–375 (RERERDRERDRDRERDRERDRERERERDRERERE) is 17 X 2 AA tandem repeats of R-[ED]. Glycyl lysine isopeptide (Lys-Gly) (interchain with G-Cter in SUMO2) cross-links involve residues K386, K388, K404, and K408. Phosphoserine is present on residues S417 and S460. At T485 the chain carries Phosphothreonine. Glycyl lysine isopeptide (Lys-Gly) (interchain with G-Cter in SUMO2) cross-links involve residues K496, K501, and K509. Phosphoserine is present on S536. Residues K541, K543, and K553 each participate in a glycyl lysine isopeptide (Lys-Gly) (interchain with G-Cter in SUMO2) cross-link.

The protein belongs to the RED family. As to quaternary structure, component of the spliceosome B complex. Interacts with SMU1. Interacts with MAD1L1. May interact with DHX15. Ubiquitous.

It localises to the nucleus. It is found in the nucleoplasm. The protein localises to the chromosome. Its subcellular location is the cytoplasm. The protein resides in the cytoskeleton. It localises to the spindle pole. In terms of biological role, involved in pre-mRNA splicing as a component of the spliceosome. Auxiliary spliceosomal protein that regulates selection of alternative splice sites in a small set of target pre-mRNA species. Required for normal mitotic cell cycle progression. Recruits MAD1L1 and MAD2L1 to kinetochores, and is required to trigger the spindle assembly checkpoint. Required for normal accumulation of SMU1. This Mus musculus (Mouse) protein is Protein Red (Ik).